An 817-amino-acid chain; its full sequence is Rho GTPase-activating protein gacII (817 aa).

The region spanning 20–204 (TTIVKIGTPK…TLIEEFQYIS (185 aa)) is the Rho-GAP domain. In terms of domain architecture, SH3 spans 238–298 (EDYLIAKANT…SQTYVDIIDI (61 aa)). Residues 318-339 (ASTILHTPPTSSSSSSSSSSSS) are compositionally biased toward low complexity. Disordered stretches follow at residues 318–638 (ASTI…NIPV), 691–771 (LGGQ…QQQQ), and 783–817 (LPPQNTNLSGKNLQRSSTSMLLNKLPPPPFSFNKN). Residues 340–358 (ILLTDNQPKLCSSTPRINN) are compositionally biased toward polar residues. Low complexity predominate over residues 359–391 (SPSSFSPSLSSTTPQLLVQQSPRQSPRQIPSIS). Polar residues predominate over residues 396–438 (PNNTNQPSFGHGTLQRTSTGYFSSKPLSISQPINMSKPTNMSP). Residues 461-471 (PPLPTKPPPLT) show a composition bias toward pro residues. A compositionally biased stretch (low complexity) spans 472–498 (IPSSSSLPTTPIKQQPQQPIQQPLTPQ). The segment covering 509 to 532 (LSSSVNTANTGNCANILSPNSDRY) has biased composition (polar residues). Low complexity-rich tracts occupy residues 534-568 (SSRSQSSVHLSGSSSSSSSSSSSSSSSSSSSSSTS), 577-587 (KSKSSKNSPSK), and 607-624 (ITTTTTTTTTTTTTTIAT). Pro residues predominate over residues 625–635 (TPPPPSKPLPN). The span at 705-722 (KSQSSYLDNNNLPSRNTN) shows a compositional bias: polar residues. Positions 725–734 (NLPPRPPPLN) are enriched in pro residues. 2 stretches are compositionally biased toward low complexity: residues 735–744 (IPQQQQQYKP) and 752–771 (QSPQSSLNQSLQIPLQQQQQ). The span at 785-803 (PQNTNLSGKNLQRSSTSML) shows a compositional bias: polar residues. Pro residues predominate over residues 807-817 (LPPPPFSFNKN).

It is found in the cytoplasm. In terms of biological role, rho GTPase-activating protein involved in the signal transduction pathway. The chain is Rho GTPase-activating protein gacII (gacII) from Dictyostelium discoideum (Social amoeba).